The following is a 310-amino-acid chain: Pyrimidine-specific ribonucleoside hydrolase RihA (310 aa).

His-240 is a catalytic residue.

Belongs to the IUNH family. RihA subfamily.

Its function is as follows. Hydrolyzes cytidine or uridine to ribose and cytosine or uracil, respectively. The chain is Pyrimidine-specific ribonucleoside hydrolase RihA from Photobacterium profundum (strain SS9).